A 670-amino-acid chain; its full sequence is NADH-ubiquinone oxidoreductase chain 5 (670 aa).

The next 15 membrane-spanning stretches (helical) occupy residues 3–23 (LLIVFLPLLGSSVAGFFGRFL), 36–56 (VSFSSILSLIAFYEVALGASA), 76–96 (FLFDSLTVVMLIVVTFISSLV), 113–133 (FMCYLSIFTFFMLMLVTGDNF), 136–156 (LFLGWEGVGLASYLLIHFWFT), 178–198 (LALGIFGCFTLFQTVDFSTIF), 218–238 (ITLICILLFIGAVGKSAQIGL), 250–270 (TPVSALIHAATMVTAGVFMIA), 283–303 (LIVITFAGAMTSFLAATTGIL), 319–339 (LGYMIFACGISNYSVSVFHLM), 340–360 (NHAFFKALLFLSAGSVIHAMS), 375–395 (FPLTYAMMLMGSLSLIGFPFL), 425–445 (VSVLFTSYYSFRLLFLTFLVP), 461–481 (IPMAIPLILLALGSLFVGYLA), and 618–638 (SGSVYHYAFAMLLGSTPFVTF).

This sequence belongs to the complex I subunit 5 family.

It is found in the mitochondrion inner membrane. It carries out the reaction a ubiquinone + NADH + 5 H(+)(in) = a ubiquinol + NAD(+) + 4 H(+)(out). Functionally, core subunit of the mitochondrial membrane respiratory chain NADH dehydrogenase (Complex I) that is believed to belong to the minimal assembly required for catalysis. Complex I functions in the transfer of electrons from NADH to the respiratory chain. The immediate electron acceptor for the enzyme is believed to be ubiquinone. In Triticum aestivum (Wheat), this protein is NADH-ubiquinone oxidoreductase chain 5 (ND5).